Consider the following 360-residue polypeptide: MDRSAGLPVRLLLLLLLLLLWSVAPQALRPGSHSLRYLFMGASKPDLGLPFFEALGYVDDQLFVSYNHESRRAEPRAPWILGQTSSQLWLQLSQSLKGWDYMFIVDFWTIMGNYNHSKVTKLRVVPESHILQVILGCEVHEDNSTSGFWKYGYDGQDHLEFCPKTLNWSAAEPRAWATKMEWEEHRIRARQSRDYLQRDCPQQLKQVLELQRGVLGQQVPTLVKVTRHWASTGTSLRCQALNFFPQNITMRWLKDSQPLDAKDVNPENVLPNGDGTYQGWLTLAVAPGEETRFSCQVEHPGLDQPLTATWEPSRSQDMIIGIISGITICAIFFVGILILVLRKRKVSGGTMGDYVLTECE.

Residues 1 to 25 form the signal peptide; it reads MDRSAGLPVRLLLLLLLLLLWSVAP. An alpha-1 region spans residues 26 to 127; that stretch reads QALRPGSHSL…KVTKLRVVPE (102 aa). Topologically, residues 26 to 319 are extracellular; that stretch reads QALRPGSHSL…WEPSRSQDMI (294 aa). Residues Asn-115, Asn-143, Asn-167, and Asn-247 are each glycosylated (N-linked (GlcNAc...) asparagine). The segment at 128–218 is alpha-2; sequence SHILQVILGC…ELQRGVLGQQ (91 aa). 2 disulfide bridges follow: Cys-137/Cys-200 and Cys-238/Cys-295. The alpha-3 stretch occupies residues 219–310; sequence VPTLVKVTRH…GLDQPLTATW (92 aa). The Ig-like C1-type domain maps to 220 to 309; it reads PTLVKVTRHW…PGLDQPLTAT (90 aa). The segment at 311–319 is connecting peptide; that stretch reads EPSRSQDMI. The helical transmembrane segment at 320 to 340 threads the bilayer; it reads IGIISGITICAIFFVGILILV. The Cytoplasmic segment spans residues 341 to 360; the sequence is LRKRKVSGGTMGDYVLTECE.

This sequence belongs to the MHC class I family. In terms of assembly, binds TFR through the extracellular domain in a pH-dependent manner.

It localises to the cell membrane. Binds to transferrin receptor (TFR) and reduces its affinity for iron-loaded transferrin. The chain is Hereditary hemochromatosis protein homolog (Hfe) from Rattus norvegicus (Rat).